The chain runs to 232 residues: Protein DOG1-like 4 (232 aa).

In terms of domain architecture, DOG1 spans 9–229 (EEKFLEFYES…RRWGNRRHYV (221 aa)).

The sequence is that of Protein DOG1-like 4 from Arabidopsis thaliana (Mouse-ear cress).